We begin with the raw amino-acid sequence, 181 residues long: Adenylate kinase (181 aa).

10 to 15 is an ATP binding site; it reads GAGKGT. Residues 30 to 59 are NMP; that stretch reads STGELFRSNIENGTKLGLEAKRYLDAGDLV. Residues Thr31, Arg36, 57–59, 85–88, and Gln92 each bind AMP; these read DLV and GFPR. The LID stretch occupies residues 126–132; it reads ARGRADD. ATP is bound at residue Arg127. Arg129 and Arg140 together coordinate AMP. Gly166 contacts ATP.

It belongs to the adenylate kinase family. Monomer.

It is found in the cytoplasm. The catalysed reaction is AMP + ATP = 2 ADP. It functions in the pathway purine metabolism; AMP biosynthesis via salvage pathway; AMP from ADP: step 1/1. Its function is as follows. Catalyzes the reversible transfer of the terminal phosphate group between ATP and AMP. Plays an important role in cellular energy homeostasis and in adenine nucleotide metabolism. This chain is Adenylate kinase, found in Mycolicibacterium paratuberculosis (strain ATCC BAA-968 / K-10) (Mycobacterium paratuberculosis).